The primary structure comprises 606 residues: NADH-ubiquinone oxidoreductase chain 5 (606 aa).

The next 16 helical transmembrane spans lie at 1-21, 43-63, 87-107, 112-132, 137-157, 171-191, 213-233, 241-261, 273-293, 301-321, 324-344, 366-386, 407-429, 457-477, 482-502, and 582-602; these read MNPFASLTLTTLIILTIPIMM, AFTLSLVPLLMFMHTGQEMII, VMFIPVALFVTWSIMEFSMWY, PFINRFFKYLVLFLITMMILV, LFQLFIGWEGVGIMSFLLIGW, AILYNRIGDIGFVLSMAWFLT, LIGLLLAAAGKSAQFGLHPWL, TPVSALLHSSTMVVAGVFLLI, VQTMTLCLGAITTLFTALCAI, IVAFSTSSQLGLMMVTIGINQ, LAFLHICMHAFFKAMLFMCSG, MPFTTTALIIGSLALTGMPYL, WALLMTLIATSLTAAYSTRIIFF, LLIGSIFAGFIISNNIPPMTV, MPLYMKMTALIVTIMGFMLAL, and GLIKLYFLSFLITIMISMTLF.

The protein belongs to the complex I subunit 5 family. In terms of assembly, core subunit of respiratory chain NADH dehydrogenase (Complex I) which is composed of 45 different subunits.

The protein resides in the mitochondrion inner membrane. The enzyme catalyses a ubiquinone + NADH + 5 H(+)(in) = a ubiquinol + NAD(+) + 4 H(+)(out). Functionally, core subunit of the mitochondrial membrane respiratory chain NADH dehydrogenase (Complex I) which catalyzes electron transfer from NADH through the respiratory chain, using ubiquinone as an electron acceptor. Essential for the catalytic activity and assembly of complex I. The chain is NADH-ubiquinone oxidoreductase chain 5 (MT-ND5) from Sus scrofa (Pig).